A 222-amino-acid polypeptide reads, in one-letter code: Probable nicotinate-nucleotide adenylyltransferase (222 aa).

Belongs to the NadD family.

It catalyses the reaction nicotinate beta-D-ribonucleotide + ATP + H(+) = deamido-NAD(+) + diphosphate. It functions in the pathway cofactor biosynthesis; NAD(+) biosynthesis; deamido-NAD(+) from nicotinate D-ribonucleotide: step 1/1. Catalyzes the reversible adenylation of nicotinate mononucleotide (NaMN) to nicotinic acid adenine dinucleotide (NaAD). In Xylella fastidiosa (strain M23), this protein is Probable nicotinate-nucleotide adenylyltransferase.